Consider the following 204-residue polypeptide: Uracil-DNA glycosylase (204 aa).

Asp-47 (proton acceptor) is an active-site residue.

It belongs to the uracil-DNA glycosylase (UDG) superfamily. UNG family.

It is found in the host nucleus. It carries out the reaction Hydrolyzes single-stranded DNA or mismatched double-stranded DNA and polynucleotides, releasing free uracil.. Functionally, excises uracil residues from the DNA which can arise as a result of misincorporation of dUMP residues by DNA polymerase or deamination of cytosines. Therefore may reduce deleterious uracil incorporation into the viral genome, particularly in terminally differentiated cells which lack DNA repair enzymes. In Bos taurus (Bovine), this protein is Uracil-DNA glycosylase (UL2).